Consider the following 201-residue polypeptide: Imidazole glycerol phosphate synthase subunit HisH (201 aa).

The Glutamine amidotransferase type-1 domain maps to 1–201; the sequence is MIAIIDYGAG…LLKRYEEMIR (201 aa). The Nucleophile role is filled by C79. Catalysis depends on residues H181 and E183.

As to quaternary structure, heterodimer of HisH and HisF.

The protein localises to the cytoplasm. The catalysed reaction is 5-[(5-phospho-1-deoxy-D-ribulos-1-ylimino)methylamino]-1-(5-phospho-beta-D-ribosyl)imidazole-4-carboxamide + L-glutamine = D-erythro-1-(imidazol-4-yl)glycerol 3-phosphate + 5-amino-1-(5-phospho-beta-D-ribosyl)imidazole-4-carboxamide + L-glutamate + H(+). It carries out the reaction L-glutamine + H2O = L-glutamate + NH4(+). It participates in amino-acid biosynthesis; L-histidine biosynthesis; L-histidine from 5-phospho-alpha-D-ribose 1-diphosphate: step 5/9. Its function is as follows. IGPS catalyzes the conversion of PRFAR and glutamine to IGP, AICAR and glutamate. The HisH subunit catalyzes the hydrolysis of glutamine to glutamate and ammonia as part of the synthesis of IGP and AICAR. The resulting ammonia molecule is channeled to the active site of HisF. This Oceanobacillus iheyensis (strain DSM 14371 / CIP 107618 / JCM 11309 / KCTC 3954 / HTE831) protein is Imidazole glycerol phosphate synthase subunit HisH.